Reading from the N-terminus, the 307-residue chain is Mediator of RNA polymerase II transcription subunit 18 (307 aa).

Residues 117–126 show a composition bias toward polar residues; the sequence is TNFNSTNEDQ. The segment at 117 to 162 is disordered; that stretch reads TNFNSTNEDQNNSKHTEDTVNESRNSDDIIDVDMDASPAPSNESCS.

The protein belongs to the Mediator complex subunit 18 family. As to quaternary structure, component of the Mediator complex, which is composed of at least 21 subunits that form three structurally distinct submodules. The Mediator head module contains MED6, MED8, MED11, SRB4/MED17, SRB5/MED18, ROX3/MED19, SRB2/MED20 and SRB6/MED22, the middle module contains MED1, MED4, NUT1/MED5, MED7, CSE2/MED9, NUT2/MED10, SRB7/MED21 and SOH1/MED31, and the tail module contains MED2, PGD1/MED3, RGR1/MED14, GAL11/MED15 and SIN4/MED16. The head and the middle modules interact directly with RNA polymerase II, whereas the elongated tail module interacts with gene-specific regulatory proteins. SRB5/MED18 interacts directly with MED8 and SRB2/MED20.

It is found in the nucleus. Functionally, component of the Mediator complex, a coactivator involved in the regulated transcription of nearly all RNA polymerase II-dependent genes. Mediator functions as a bridge to convey information from gene-specific regulatory proteins to the basal RNA polymerase II transcription machinery. The Mediator complex, having a compact conformation in its free form, is recruited to promoters by direct interactions with regulatory proteins and serves for the assembly of a functional preinitiation complex with RNA polymerase II and the general transcription factors. The Mediator complex unfolds to an extended conformation and partially surrounds RNA polymerase II, specifically interacting with the unphosphorylated form of the C-terminal domain (CTD) of RNA polymerase II. The Mediator complex dissociates from the RNA polymerase II holoenzyme and stays at the promoter when transcriptional elongation begins. The polypeptide is Mediator of RNA polymerase II transcription subunit 18 (SRB5) (Saccharomyces cerevisiae (strain ATCC 204508 / S288c) (Baker's yeast)).